We begin with the raw amino-acid sequence, 258 residues long: Octanoyltransferase (258 aa).

Residues 42–226 (NVGTDTLLLL…AVVAALDGEL (185 aa)) form the BPL/LPL catalytic domain. Substrate contacts are provided by residues 80–87 (RGGKITWH), 156–158 (AIG), and 169–171 (GFS). Catalysis depends on cysteine 187, which acts as the Acyl-thioester intermediate.

Belongs to the LipB family.

Its subcellular location is the cytoplasm. It carries out the reaction octanoyl-[ACP] + L-lysyl-[protein] = N(6)-octanoyl-L-lysyl-[protein] + holo-[ACP] + H(+). It functions in the pathway protein modification; protein lipoylation via endogenous pathway; protein N(6)-(lipoyl)lysine from octanoyl-[acyl-carrier-protein]: step 1/2. Functionally, catalyzes the transfer of endogenously produced octanoic acid from octanoyl-acyl-carrier-protein onto the lipoyl domains of lipoate-dependent enzymes. Lipoyl-ACP can also act as a substrate although octanoyl-ACP is likely to be the physiological substrate. This Rhodococcus jostii (strain RHA1) protein is Octanoyltransferase.